The sequence spans 483 residues: Zinc metalloproteinase/disintegrin (483 aa).

Positions Met1–Ser20 are cleaved as a signal peptide. The propeptide occupies Ile21–Glu191. Residues Arg198–Pro394 enclose the Peptidase M12B domain. The Ca(2+) site is built by Glu201 and Asp285. 3 disulfide bridges follow: Cys309–Cys389, Cys349–Cys373, and Cys351–Cys356. Residue His334 coordinates Zn(2+). Glu335 is an active-site residue. Positions 338 and 344 each coordinate Zn(2+). Residues Cys389 and Asn392 each contribute to the Ca(2+) site. The propeptide occupies Leu395 to Glu414. Residues Thr402 to Ala483 form the Disintegrin domain. Cystine bridges form between Cys425-Cys448, Cys439-Cys445, Cys444-Cys469, and Cys457-Cys476. The Cell attachment site; atypical (KGD) signature appears at Lys461 to Asp463.

The protein belongs to the venom metalloproteinase (M12B) family. P-II subfamily. P-IIe sub-subfamily. Heterodimer with piscivostatin-alpha; disulfide-linked (disintegrin). Zn(2+) is required as a cofactor. In terms of tissue distribution, expressed by the venom gland.

It localises to the secreted. Impairs hemostasis in the envenomed animal. Functionally, inhibits platelet aggregation induced by ADP. Acts by inhibiting fibrinogen interaction with platelet receptors GPIIb/GPIIIa (ITGA2B/ITGB3). Also inhibits platelet aggregate dissociation in human platelet-rich plasma. In Agkistrodon piscivorus piscivorus (Eastern cottonmouth), this protein is Zinc metalloproteinase/disintegrin.